Consider the following 730-residue polypeptide: Elongation factor 2 (730 aa).

A tr-type G domain is found at 19 to 260 (KFIRNIGIVA…MVVKHLPDPF (242 aa)). GTP-binding positions include 28-35 (AHIDHGKT), 94-98 (DTPGH), and 148-151 (NKVD). H597 is subject to Diphthamide.

The protein belongs to the TRAFAC class translation factor GTPase superfamily. Classic translation factor GTPase family. EF-G/EF-2 subfamily.

Its subcellular location is the cytoplasm. In terms of biological role, catalyzes the GTP-dependent ribosomal translocation step during translation elongation. During this step, the ribosome changes from the pre-translocational (PRE) to the post-translocational (POST) state as the newly formed A-site-bound peptidyl-tRNA and P-site-bound deacylated tRNA move to the P and E sites, respectively. Catalyzes the coordinated movement of the two tRNA molecules, the mRNA and conformational changes in the ribosome. This chain is Elongation factor 2, found in Methanosphaerula palustris (strain ATCC BAA-1556 / DSM 19958 / E1-9c).